Reading from the N-terminus, the 179-residue chain is Large ribosomal subunit protein uL5 (179 aa).

Belongs to the universal ribosomal protein uL5 family. Part of the 50S ribosomal subunit; part of the 5S rRNA/L5/L18/L25 subcomplex. Contacts the 5S rRNA and the P site tRNA. Forms a bridge to the 30S subunit in the 70S ribosome.

Functionally, this is one of the proteins that bind and probably mediate the attachment of the 5S RNA into the large ribosomal subunit, where it forms part of the central protuberance. In the 70S ribosome it contacts protein S13 of the 30S subunit (bridge B1b), connecting the 2 subunits; this bridge is implicated in subunit movement. Contacts the P site tRNA; the 5S rRNA and some of its associated proteins might help stabilize positioning of ribosome-bound tRNAs. The sequence is that of Large ribosomal subunit protein uL5 from Tolumonas auensis (strain DSM 9187 / NBRC 110442 / TA 4).